Here is an 812-residue protein sequence, read N- to C-terminus: Fibroblast growth factor receptor 1 (812 aa).

Positions Met-1–Val-20 are cleaved as a signal peptide. The Extracellular portion of the chain corresponds to Ala-21 to Leu-371. In terms of domain architecture, Ig-like C2-type 1 spans Ser-25–Ser-118. A disulfide bond links Cys-54 and Cys-100. 9 N-linked (GlcNAc...) asparagine glycosylation sites follow: Asn-76, Asn-116, Asn-133, Asn-223, Asn-236, Asn-260, Asn-292, Asn-313, and Asn-326. The segment at Leu-121–His-153 is disordered. Positions Ala-124–Ser-135 are enriched in acidic residues. 2 consecutive Ig-like C2-type domains span residues Pro-154–Asp-242 and Pro-251–Thr-353. Residues Cys-174 and Cys-226 are joined by a disulfide bond. Cysteines 273 and 337 form a disulfide. A helical transmembrane segment spans residues Glu-372 to Phe-393. At Lys-394 to Arg-812 the chain is on the cytoplasmic side. Residue Tyr-457 is modified to Phosphotyrosine; by autocatalysis. One can recognise a Protein kinase domain in the interval Leu-472–Leu-761. ATP is bound by residues Leu-478–Gly-484, Lys-508, Glu-556–Thr-558, and Asn-562. Phosphotyrosine; by autocatalysis occurs at positions 577 and 579. The active-site Proton acceptor is the Asp-617. Residues Arg-621 and Asp-635 each coordinate ATP. Residues Tyr-647, Tyr-648, Tyr-724, and Tyr-760 each carry the phosphotyrosine; by autocatalysis modification. Residues Ser-784–Arg-812 are disordered.

Belongs to the protein kinase superfamily. Tyr protein kinase family. Fibroblast growth factor receptor subfamily. Monomer. Homodimer after ligand binding. Interacts with il17rd. In terms of processing, autophosphorylated. Binding of FGF family members together with heparan sulfate proteoglycan or heparin promotes receptor dimerization and autophosphorylation on tyrosine residues. Autophosphorylation occurs in trans between the two FGFR molecules present in the dimer and proceeds in a highly ordered manner. Phosphotyrosine residues provide docking sites for interacting proteins and so are crucial for FGFR1 function and its regulation. Ubiquitinated. FGFR1 is rapidly ubiquitinated after autophosphorylation, leading to internalization and degradation. Post-translationally, N-glycosylated in the endoplasmic reticulum. The N-glycan chains undergo further maturation to an Endo H-resistant form in the Golgi apparatus.

The protein localises to the cell membrane. Its subcellular location is the nucleus. It localises to the cytoplasm. The protein resides in the cytosol. It is found in the cytoplasmic vesicle. It carries out the reaction L-tyrosyl-[protein] + ATP = O-phospho-L-tyrosyl-[protein] + ADP + H(+). Present in an inactive conformation in the absence of bound ligand. Ligand binding leads to dimerization and activation by sequential autophosphorylation on tyrosine residues. Tyrosine-protein kinase that acts as a cell-surface receptor for fibroblast growth factors and plays an essential role in the regulation of embryonic development, cell proliferation, differentiation and migration. Required for normal mesoderm patterning and normal skeletogenesis. Phosphorylates PLCG1, FRS2, GAB1 and SHB. Ligand binding leads to the activation of several signaling cascades. Activation of PLCG1 leads to the production of the cellular signaling molecules diacylglycerol and inositol-1,4,5-trisphosphate. Phosphorylation of FRS2 triggers recruitment of GRB2, GAB1, PIK3R1 and SOS1, and mediates activation of RAS, MAPK1/ERK2, MAPK3/ERK1 and the MAP kinase signaling pathway, as well as of the AKT1 signaling pathway. Promotes phosphorylation of SHC1, STAT1 and PTPN11/SHP2. In the nucleus, enhances RPS6KA1 and CREB1 activity and contributes to the regulation of transcription. FGFR1 signaling is down-regulated by ubiquitination, internalization and degradation. The protein is Fibroblast growth factor receptor 1 (fgfr1) of Xenopus laevis (African clawed frog).